Reading from the N-terminus, the 527-residue chain is Peptide chain release factor 3 (527 aa).

Residues 9–278 (NKRRTFAIIS…GLTQWAPKPQ (270 aa)) form the tr-type G domain. Residues 18–25 (SHPDAGKT), 86–90 (DTPGH), and 140–143 (NKLD) contribute to the GTP site.

It belongs to the TRAFAC class translation factor GTPase superfamily. Classic translation factor GTPase family. PrfC subfamily.

Its subcellular location is the cytoplasm. Increases the formation of ribosomal termination complexes and stimulates activities of RF-1 and RF-2. It binds guanine nucleotides and has strong preference for UGA stop codons. It may interact directly with the ribosome. The stimulation of RF-1 and RF-2 is significantly reduced by GTP and GDP, but not by GMP. In Haemophilus influenzae (strain 86-028NP), this protein is Peptide chain release factor 3.